We begin with the raw amino-acid sequence, 2098 residues long: Unconventional myosin heavy chain 6 (2098 aa).

The 671-residue stretch at 62 to 732 (QGVEDMCQLG…HDLVLEQEYY (671 aa)) folds into the Myosin motor domain. 155-162 (GESGAGKT) lines the ATP pocket. Actin-binding stretches follow at residues 609–631 (LEQL…KPNE) and 711–725 (QLGK…KHDL). IQ domains lie at 735 to 757 (LKDK…DFEK), 758 to 787 (QRQA…GFSR), and 804 to 833 (LRKT…RGEK). The tract at residues 860–898 (FLPSDGKDSGNENDSADSSRRGSYSRLHTSPVMPPANIP) is disordered. The 240-residue stretch at 929-1168 (HVKKPLKTAL…PSYVELQANK (240 aa)) folds into the MyTH4 1 domain. A Ras-associating domain is found at 1171-1211 (KPVVLAVTFMDGSVKTLCADSATTAAELCKQLAEKVGLTNS). Residues 1173-1481 (VVLAVTFMDG…MFLEGLKKRS (309 aa)) form the FERM 1 domain. The SH3 domain occupies 1479-1547 (KRSRYLVAIK…RAENVYVLPT (69 aa)). The MyTH4 2 domain occupies 1624–1772 (FSREHIDQPL…PHLVEVEAIQ (149 aa)). The FERM 2 domain occupies 1778–2086 (IFHKVFFPDN…SYISLLISNQ (309 aa)).

This sequence belongs to the TRAFAC class myosin-kinesin ATPase superfamily. Myosin family. Interacts with unc-98.

The protein resides in the cytoplasm. Myosins are actin-based motor molecules with ATPase activity. Unconventional myosins serve in intracellular movements. Their highly divergent tails are presumed to bind to membranous compartments, which would be moved relative to actin filaments. The chain is Unconventional myosin heavy chain 6 from Caenorhabditis elegans.